An 83-amino-acid polypeptide reads, in one-letter code: Subtilisin-chymotrypsin inhibitor CI-1A (83 aa).

The tract at residues 1–24 (MSSMEGSVLKYPEPTEGSIGASSA) is disordered.

This sequence belongs to the protease inhibitor I13 (potato type I serine protease inhibitor) family.

In terms of biological role, inhibits both subtilisin and chymotrypsin. The protein is Subtilisin-chymotrypsin inhibitor CI-1A of Hordeum vulgare (Barley).